The chain runs to 359 residues: Protein Wnt-5b (359 aa).

A signal peptide spans 1–17; sequence MPSLLLLFTAALLSSWA. Cys83 and Cys94 are joined by a disulfide. 2 N-linked (GlcNAc...) asparagine glycosylation sites follow: Asn93 and Asn99. Intrachain disulfides connect Cys133/Cys141, Cys143/Cys161, Cys217/Cys231, Cys219/Cys226, Cys288/Cys319, Cys304/Cys314, Cys318/Cys358, Cys334/Cys349, Cys336/Cys346, and Cys341/Cys342. Residue Ser223 is the site of O-palmitoleoyl serine; by PORCN attachment. Residues Asn291 and Asn305 are each glycosylated (N-linked (GlcNAc...) asparagine).

Belongs to the Wnt family. Interacts with PORCN. In terms of processing, palmitoleoylation is required for efficient binding to frizzled receptors. Depalmitoleoylation leads to Wnt signaling pathway inhibition.

It is found in the secreted. It localises to the extracellular space. Its subcellular location is the extracellular matrix. In terms of biological role, ligand for members of the frizzled family of seven transmembrane receptors. Probable developmental protein. May be a signaling molecule which affects the development of discrete regions of tissues. Is likely to signal over only few cell diameters. This chain is Protein Wnt-5b (WNT5B), found in Homo sapiens (Human).